Consider the following 369-residue polypeptide: Peptide chain release factor 1 (369 aa).

Residue Gln-238 is modified to N5-methylglutamine.

It belongs to the prokaryotic/mitochondrial release factor family. Methylated by PrmC. Methylation increases the termination efficiency of RF1.

Its subcellular location is the cytoplasm. Peptide chain release factor 1 directs the termination of translation in response to the peptide chain termination codons UAG and UAA. This is Peptide chain release factor 1 from Parabacteroides distasonis (strain ATCC 8503 / DSM 20701 / CIP 104284 / JCM 5825 / NCTC 11152).